Consider the following 360-residue polypeptide: Mannose-1-phosphate guanylyltransferase catalytic subunit beta (360 aa).

The tract at residues 2–222 is substrate-binding domain; it reads KALILVGGYG…QGFWMDIGQP (221 aa). Residue Asp-110 coordinates GDP-alpha-D-mannose. Mg(2+) is bound at residue Asp-110. Lys-162 is an active-site residue. Asp-218 lines the GDP-alpha-D-mannose pocket. Asp-218 contacts Mg(2+). A hexapeptide repeat domain region spans residues 245-360; that stretch reads HVGPGFIGNV…ESVPEPRIIM (116 aa).

It belongs to the transferase hexapeptide repeat family. In terms of assembly, component of the GMPPA-GMPPB mannose-1-phosphate guanylyltransferase complex composed of 4 gmppa subunits and 8 gmppb subunits; the complex is organized into three layers, a central layer made up of 2 gmppa dimers sandwiched between two layers each made up of 2 gmppb dimers. Catalytic activity of gmppb is reduced when part of the complex and binding of GDP-alpha-D-Mannose by gmppa induces allosteric feedback inhibition of gmppb. Requires Mg(2+) as cofactor.

The catalysed reaction is alpha-D-mannose 1-phosphate + GTP + H(+) = GDP-alpha-D-mannose + diphosphate. The protein operates within nucleotide-sugar biosynthesis; GDP-alpha-D-mannose biosynthesis; GDP-alpha-D-mannose from alpha-D-mannose 1-phosphate (GTP route): step 1/1. Enzyme activity is reduced by incorporation into the GMPPA-GMPPB mannose-1-phosphate guanylyltransferase complex. Allosterically inhibited, when part of the GMPPA-GMPPB complex, by GDP-alpha-D-mannose binding to GMPPA. In terms of biological role, catalytic subunit of the GMPPA-GMPPB mannose-1-phosphate guanylyltransferase complex. Catalyzes the formation of GDP-mannose, an essential precursor of glycan moieties of glycoproteins and glycolipids. Can catalyze the reverse reaction in vitro. Together with GMPPA regulates GDP-alpha-D-mannose levels. This is Mannose-1-phosphate guanylyltransferase catalytic subunit beta (gmppb) from Xenopus tropicalis (Western clawed frog).